The chain runs to 622 residues: Palmitoyl-protein thioesterase-dolichyl pyrophosphate phosphatase fusion 1 (622 aa).

An N-terminal signal peptide occupies residues 1–24 (MLSCSSFLIFFLFSWVLLPMKSFA). Topologically, residues 25-405 (IPIISLDKVR…NVSEEKGPKS (381 aa)) are lumenal. A disulfide bond links C106 and C138. Residue S125 is part of the active site. N223 is a glycosylation site (N-linked (GlcNAc...) asparagine). Residue D245 is part of the active site. N260 carries N-linked (GlcNAc...) asparagine glycosylation. H298 is a catalytic residue. Residue N396 is glycosylated (N-linked (GlcNAc...) asparagine). Residues 406-426 (FANLAFITIFSHFFYHIDDMW) traverse the membrane as a helical segment. At 427–428 (RS) the chain is on the cytoplasmic side. A helical membrane pass occupies residues 429–449 (TLGLFSLIPQIIGIIYLTVMF). Over 450–488 (TGRELDTFMQFGGQVVNEFINYVVKVSLKYPRPADIEYG) the chain is Lumenal. Residues 489-511 (VGYGMPSSHSQFMGFFSAYMIAW) traverse the membrane as a helical segment. The Cytoplasmic segment spans residues 512-519 (DYKYRRSQ). The chain crosses the membrane as a helical span at residues 520–540 (CFSMLSFAKYAIYLTLSTFVC). Over 541 to 552 (SSRYLLDFHYLT) the chain is Lumenal. Residues 553 to 573 (QVVYGYMIGFGVGLFWVYLVG) form a helical membrane-spanning segment. Over 574–622 (KLRSLGVTKWLLSLPPLQFFYIKDTIPHSKDNHKRQWLESKQFKNQKSN) the chain is Cytoplasmic.

This sequence in the N-terminal section; belongs to the palmitoyl-protein thioesterase family. In the C-terminal section; belongs to the dolichyldiphosphatase family. Proteolytically cleaved, possibly by krp1.

It localises to the vacuole. The protein localises to the endoplasmic reticulum membrane. It carries out the reaction S-hexadecanoyl-L-cysteinyl-[protein] + H2O = L-cysteinyl-[protein] + hexadecanoate + H(+). The catalysed reaction is a di-trans,poly-cis-dolichyl diphosphate + H2O = a di-trans,poly-cis-dolichyl phosphate + phosphate + H(+). Its function is as follows. Essential protein. Removes thioester-linked fatty acyl groups such as palmitate from modified cysteine residues in proteins or peptides during vacuolar degradation. Required for efficient N-glycosylation. Necessary for maintaining optimal levels of dolichol-linked oligosaccharides. The chain is Palmitoyl-protein thioesterase-dolichyl pyrophosphate phosphatase fusion 1 (pdf1) from Schizosaccharomyces pombe (strain 972 / ATCC 24843) (Fission yeast).